Reading from the N-terminus, the 693-residue chain is Elongation factor G (693 aa).

The 276-residue stretch at 8-283 folds into the tr-type G domain; sequence PQQRNIGIMA…AVVEYLPSPV (276 aa). GTP is bound by residues 17-24, 81-85, and 135-138; these read AHIDAGKT, DTPGH, and NKMD.

Belongs to the TRAFAC class translation factor GTPase superfamily. Classic translation factor GTPase family. EF-G/EF-2 subfamily.

The protein localises to the cytoplasm. Functionally, catalyzes the GTP-dependent ribosomal translocation step during translation elongation. During this step, the ribosome changes from the pre-translocational (PRE) to the post-translocational (POST) state as the newly formed A-site-bound peptidyl-tRNA and P-site-bound deacylated tRNA move to the P and E sites, respectively. Catalyzes the coordinated movement of the two tRNA molecules, the mRNA and conformational changes in the ribosome. This is Elongation factor G from Oleidesulfovibrio alaskensis (strain ATCC BAA-1058 / DSM 17464 / G20) (Desulfovibrio alaskensis).